The sequence spans 351 residues: 3-dehydroquinate synthase (351 aa).

NAD(+)-binding positions include 60–65 (DGEEYK), 94–98 (GVISD), 118–119 (TT), Lys-131, Lys-140, and 158–161 (FLKT). Positions 173, 239, and 256 each coordinate Zn(2+).

This sequence belongs to the sugar phosphate cyclases superfamily. Dehydroquinate synthase family. NAD(+) is required as a cofactor. Requires Co(2+) as cofactor. It depends on Zn(2+) as a cofactor.

It localises to the cytoplasm. The catalysed reaction is 7-phospho-2-dehydro-3-deoxy-D-arabino-heptonate = 3-dehydroquinate + phosphate. It participates in metabolic intermediate biosynthesis; chorismate biosynthesis; chorismate from D-erythrose 4-phosphate and phosphoenolpyruvate: step 2/7. Functionally, catalyzes the conversion of 3-deoxy-D-arabino-heptulosonate 7-phosphate (DAHP) to dehydroquinate (DHQ). The polypeptide is 3-dehydroquinate synthase (Campylobacter jejuni subsp. jejuni serotype O:2 (strain ATCC 700819 / NCTC 11168)).